The sequence spans 336 residues: MADFQTSTQRAKWIFTPQKLAERYKAANQRAVQMLEKCGTTQVEVDASGSLTYPKDKVGSGDQADKKLKPLSADEERFMRAFYEAKVQEVCSAFAFPHKIQATALQYFKRFYLQWSVMQHHPKEIMLTCVYAACKIEENHVSAEEIGKGINQDHRIILKYEMAVLQSLEFDLIVYAPYRAIEGFVNNMEEFLQARDDEIQKLESLLKGATAEADKVMLTDAPLLFPPGQLALASLRIANGVLGVIDFDRYLENIVSQPNSEHTTSELTKLLDNIEYLVKNYKCPSEKDMKHINRKLKSCLGHSSSHDESKKREKRSKHKSHRSSNDTPNGAPPPIG.

Position 2 is an N-acetylalanine (Ala2). A disordered region spans residues 297–336 (KSCLGHSSSHDESKKREKRSKHKSHRSSNDTPNGAPPPIG). Residues 312–322 (REKRSKHKSHR) are compositionally biased toward basic residues.

It belongs to the cyclin family. As to quaternary structure, interacts with CDKA-1, CDKD-2 and CDKD-3, but not CDKD-1 and CDKF-1.

The protein localises to the cytoplasm. The protein resides in the nucleus. In terms of biological role, associates with CDK-2 and CDK-3 and activates the CDK kinases. In Arabidopsis thaliana (Mouse-ear cress), this protein is Cyclin-H1-1 (CYCH1-1).